Here is a 311-residue protein sequence, read N- to C-terminus: Heparan sulfate glucosamine 3-O-sulfotransferase 1 (311 aa).

An N-terminal signal peptide occupies residues 1 to 20 (MTLLLLGAVLLVAQPQLVHS). An N-linked (GlcNAc...) asparagine glycan is attached at asparagine 52. Residues 68–72 (KGGTR), arginine 151, and serine 159 contribute to the 3'-phosphoadenylyl sulfate site. Asparagine 196, asparagine 246, and asparagine 253 each carry an N-linked (GlcNAc...) asparagine glycan. Tyrosine 259 contributes to the 3'-phosphoadenylyl sulfate binding site. A disulfide bridge connects residues cysteine 260 and cysteine 269. 274 to 278 (KGRAH) provides a ligand contact to 3'-phosphoadenylyl sulfate.

It belongs to the sulfotransferase 1 family.

The protein resides in the golgi apparatus lumen. The enzyme catalyses alpha-D-glucosaminyl-[heparan sulfate](n) + 3'-phosphoadenylyl sulfate = 3-sulfo-alpha-D-glucosaminyl-[heparan sulfate](n) + adenosine 3',5'-bisphosphate + H(+). Its function is as follows. Sulfotransferase that utilizes 3'-phospho-5'-adenylyl sulfate (PAPS) to catalyze the transfer of a sulfo group to position 3 of glucosamine residues in heparan. Catalyzes the rate limiting step in the biosynthesis of heparan sulfate (HSact). This modification is a crucial step in the biosynthesis of anticoagulant heparan sulfate as it completes the structure of the antithrombin pentasaccharide binding site. This is Heparan sulfate glucosamine 3-O-sulfotransferase 1 (Hs3st1) from Mus musculus (Mouse).